The following is a 165-amino-acid chain: MKNKLIAKSLLTIAAIGITTTTIASTADASEGYGPREKKPVSINHNIVEYNDGTFKYQSRPKFNSTPKYIKFKHDYNILEFNDGTFEYGARPQFNKPAAKTDATIKKEQKLIQAQNLVREFEKTHTVSAHRKAQKAVNLVSFEYKVKKMVLQERIDNVLKQGLVR.

The signal sequence occupies residues 1–29 (MKNKLIAKSLLTIAAIGITTTTIASTADA).

Interacts with host fibrinogen alpha chain/FGA. Interacts with host complement protein C3.

The protein resides in the secreted. Its function is as follows. Extracellular fibrinogen-binding protein that plays an important role in virulence. By interacting with the alpha chain of fibrinogen and its derivative fibrin, enhances a non-functional interaction between fibrinogen and platelets and is responsible for repression of fibrinogen-dependent platelet aggregation. In addition, assembles a fibrinogen protective shield around the bacteria which results in impaired phagocytic clearance by the host. Mechanistically, interacts with host complement C3b deposited on the surface of the bacterium via its C-terminal and then recruits fibrinogen via its N-terminal. This is Fibrinogen-binding protein (fib) from Staphylococcus aureus.